Consider the following 949-residue polypeptide: MAASTGYVRLWAAARCWVLRRPLLAVTGGRVPSASGSWLRRGCRACDMSAPWGGRVLPGGVQWRGLWDSGNRGGSDETSEGGAEDGATASTGEGPVVTALAPMTVPDVFPHLPLIAITRNPVFPRFIKIVEVKNKKLVELLRRKVRLAQPYVGVFLKRDDNNESDVVESLDEIYHTGTFAQIHEMQDLGDKLRMIVTGHRRIHISRQLEVEPEGLEPEAEKQKSRRKLKRGKKEVEDELGPKPQLEMVTEAATDTSKEVLMVEVENVAHEDFQVTEEVKALTAEIVKTIRDIIALNPLYRESVLQMMQAGQRVVDNPIYLSDMGAALTGAESHELQDVLEETNILKRLYKALSLLKKEFELSKLQQRLGREVEEKIKQTHRKYLLQEQLKIIKKELGLEKDDKDAIEEKFRERLRELVVPKHVMDVVDEELSKLALLDNHSSEFNVTRNYLDWLTSIPWGRQSDENLDLARAQAVLEEDHYGMEDVKKRVLEFIAVSQLRGSTQGKILCFHGPPGVGKTSIARSIARALGREYFRFSVGGMTDVAEIKGHRRTYVGAMPGKIIQCLKKTKTENPLVLIDEVDKIGRGYQGDPSSALLELLDPEQNANFLDHYLDVPVDLSKVLFICTANVIDTIPEPLRDRMEMINVSGYVAQEKLAIAERYLVPQARTLCGLDESKAQLSAAVLTLLIKQYCRESGVRNLQKQVEKVLRKAAYKIVSGEAQTVQVTPENLQDFVGKPVFTVERMYEVTPPGVVMGLAWTAMGGSTLFVETSLRRPQPSGSKEDKDGSLEVTGQLGDVMKESARIAYTYARAFLMEQDPENDFLVTSHIHLHVPEGATPKDGPSAGCTIVTALLSLALGQPVLQNLAMTGEVSLTGKVLPVGGIKEKTIAAKRAGVTCIILPAENRKDYSDLAPFITEGLEVHFVEHYRDIFPIAFPRREHREALAVER.

A mitochondrion-targeting transit peptide spans 1–65; the sequence is MAASTGYVRL…VLPGGVQWRG (65 aa). 2 disordered regions span residues 68–94 and 213–240; these read DSGNRGGSDETSEGGAEDGATASTGEG and EGLEPEAEKQKSRRKLKRGKKEVEDELG. The region spanning 112–359 is the Lon N-terminal domain; it reads LPLIAITRNP…KALSLLKKEF (248 aa). The segment covering 223-232 has biased composition (basic residues); that stretch reads KSRRKLKRGK. Position 512-519 (512-519) interacts with ATP; sequence GPPGVGKT. In terms of domain architecture, Lon proteolytic spans 748–938; the sequence is VTPPGVVMGL…RDIFPIAFPR (191 aa). Residues serine 844 and lysine 887 contribute to the active site.

It belongs to the peptidase S16 family. In terms of assembly, homohexamer. Organized in a ring with a central cavity. The ATP-binding and proteolytic domains (AP-domain) form a hexameric chamber, while the N-terminal domain is arranged as a trimer of dimers. DNA and RNA binding is stimulated by substrate and inhibited by ATP binding. Interacts with TWNK and mitochondrial DNA polymerase subunit POLG. As to expression, detected in liver &gt; heart &gt; kidney &gt; testis.

The protein resides in the mitochondrion matrix. The catalysed reaction is Hydrolysis of proteins in presence of ATP.. ATP-dependent serine protease that mediates the selective degradation of misfolded, unassembled or oxidatively damaged polypeptides as well as certain short-lived regulatory proteins in the mitochondrial matrix. Endogenous substrates include mitochondrial steroidogenic acute regulatory (StAR) protein, DELE1, helicase Twinkle (TWNK) and the large ribosomal subunit protein MRPL32/bL32m. MRPL32/bL32m is protected from degradation by LONP1 when it is bound to a nucleic acid (RNA), but TWNK is not. May also have a chaperone function in the assembly of inner membrane protein complexes. Participates in the regulation of mitochondrial gene expression and in the maintenance of the integrity of the mitochondrial genome. Binds to mitochondrial promoters and RNA in a single-stranded, site-specific, and strand-specific manner. May regulate mitochondrial DNA replication and/or gene expression using site-specific, single-stranded DNA binding to target the degradation of regulatory proteins binding to adjacent sites in mitochondrial promoters. This is Lon protease homolog, mitochondrial (Lonp1) from Mus musculus (Mouse).